A 776-amino-acid chain; its full sequence is Transcriptional regulator QRICH1 (776 aa).

M1 carries the post-translational modification N-acetylmethionine. Positions 6 to 48 (ENTISFEEYIRVKARSVPQHRMKEFLDSLASKGPEALQEFQQT) constitute a CARD domain. Disordered regions lie at residues 139 to 164 (IQGQ…PSQL) and 218 to 240 (ALSP…GTAS). Phosphoserine is present on S345. Residues K353 and K358 each participate in a glycyl lysine isopeptide (Lys-Gly) (interchain with G-Cter in SUMO2) cross-link. Over residues 419–429 (QQQPQQQTPQE) the composition is skewed to low complexity. The tract at residues 419 to 441 (QQQPQQQTPQEQTPPPQQQQQQL) is disordered. Residue S464 is modified to Phosphoserine.

It localises to the nucleus. The protein localises to the cytoplasm. The protein resides in the cell membrane. Its function is as follows. Transcriptional regulator that acts as a mediator of the integrated stress response (ISR) through transcriptional control of protein homeostasis under conditions of ER stress. Controls the outcome of the unfolded protein response (UPR) which is an ER-stress response pathway. ER stress induces QRICH1 translation by a ribosome translation re-initiation mechanism in response to EIF2S1/eIF-2-alpha phosphorylation, and stress-induced QRICH1 regulates a transcriptional program associated with protein translation, protein secretion-mediated proteotoxicity and cell death during the terminal UPR. May cooperate with ATF4 transcription factor signaling to regulate ER homeostasis which is critical for cell viability. Up-regulates CASP3/caspase-3 activity in epithelial cells under ER stress. Central regulator of proteotoxicity associated with ER stress-mediated inflammatory diseases in the intestines and liver. Involved in chondrocyte hypertrophy, a process required for normal longitudinal bone growth. The polypeptide is Transcriptional regulator QRICH1 (Homo sapiens (Human)).